Here is a 311-residue protein sequence, read N- to C-terminus: Probable mitochondrial phosphate carrier protein (311 aa).

At 1 to 23 (MSTPLIPPAPPKKTLQLYTPQYY) the chain is on the mitochondrial intermembrane side. 3 Solcar repeats span residues 21 to 105 (QYYG…FKHK), 118 to 203 (YRTS…IVEA), and 219 to 303 (EKIG…FKIM). Residues 24–44 (GLCTLGGLLACGTTHSAITPL) form a helical membrane-spanning segment. The Mitochondrial matrix segment spans residues 45–67 (DLIKCRKQVNPNIYPGNIAGFKT). Residues 68 to 88 (ILSKEGLRGLYTGGMPTLIGY) form a helical membrane-spanning segment. Residues 89–120 (SLQGCGKYGFYELFKHKYSTLVGAQKAHEYRT) lie on the Mitochondrial intermembrane side of the membrane. A helical membrane pass occupies residues 121–141 (SIYLAASASAELLADIMLCPM). Residues 142–171 (EAIKVRVQTSNPRFANTTREAWSKIVTNEG) lie on the Mitochondrial matrix side of the membrane. The chain crosses the membrane as a helical span at residues 172 to 192 (FGTLYRGLAPLWFRQIPYTMM). The Mitochondrial intermembrane portion of the chain corresponds to 193 to 220 (KFASFERIVEALYTYIGKPKNMYSKAEK). Residues 221–241 (IGISFAGGYMAGVLCAIISHP) traverse the membrane as a helical segment. The Mitochondrial matrix portion of the chain corresponds to 242 to 269 (ADVMVSKLNSNKKAGEGAGAAAARIYKE). A helical membrane pass occupies residues 270–290 (IGFSGLWNGLGVRIVMIGTLT). The Mitochondrial intermembrane portion of the chain corresponds to 291–311 (GAQWLIYDSFKIMCGFPATGA).

Belongs to the mitochondrial carrier (TC 2.A.29) family.

Its subcellular location is the mitochondrion inner membrane. Functionally, transport of phosphate groups from the cytosol to the mitochondrial matrix. The chain is Probable mitochondrial phosphate carrier protein from Schizosaccharomyces pombe (strain 972 / ATCC 24843) (Fission yeast).